Consider the following 106-residue polypeptide: Biogenesis of lysosome-related organelles complex 1 subunit 6 (106 aa).

Residues 78-106 (KKTSQLELSDTNIEDGSTTSTPTTTNKSQ) form a disordered region. Polar residues predominate over residues 82-93 (QLELSDTNIEDG). Low complexity predominate over residues 94–106 (STTSTPTTTNKSQ).

This sequence belongs to the BLOC1S6 family. As to quaternary structure, homodimer (isoform 1). Component of the biogenesis of lysosome-related organelles complex-1 (BLOC-1) composed at least of blos-1, blos-2, blos-4, dsbn-1, glo-2, mutd-1 and snpn-1. Isoform 1 interacts with blos-1 and blos-4.

Its subcellular location is the cytoplasm. It localises to the endosome. In terms of biological role, component of the biogenesis of lysosome-related organelles complex-1 (BLOC-1) involved in gut granule biogenesis. This Caenorhabditis elegans protein is Biogenesis of lysosome-related organelles complex 1 subunit 6 (glo-2).